The primary structure comprises 403 residues: Tyrosine--tRNA ligase (403 aa).

Positions 46 to 55 (PTAPDLHLGH) match the 'HIGH' region motif. The 'KMSKS' region signature appears at 230–234 (KMSKS). Residue K233 participates in ATP binding. Residues 342-402 (LFITQILNQA…GKKAYAKVTV (61 aa)) form the S4 RNA-binding domain.

Belongs to the class-I aminoacyl-tRNA synthetase family. TyrS type 2 subfamily. Homodimer.

It localises to the cytoplasm. The catalysed reaction is tRNA(Tyr) + L-tyrosine + ATP = L-tyrosyl-tRNA(Tyr) + AMP + diphosphate + H(+). Its function is as follows. Catalyzes the attachment of tyrosine to tRNA(Tyr) in a two-step reaction: tyrosine is first activated by ATP to form Tyr-AMP and then transferred to the acceptor end of tRNA(Tyr). In Psychrobacter arcticus (strain DSM 17307 / VKM B-2377 / 273-4), this protein is Tyrosine--tRNA ligase.